Reading from the N-terminus, the 220-residue chain is Large ribosomal subunit protein eL15 (220 aa).

Belongs to the eukaryotic ribosomal protein eL15 family.

The chain is Large ribosomal subunit protein eL15 from Staphylothermus marinus (strain ATCC 43588 / DSM 3639 / JCM 9404 / F1).